Consider the following 170-residue polypeptide: Calcineurin subunit B type 2 (170 aa).

Residue Gly-2 is the site of N-myristoyl glycine attachment. EF-hand domains lie at 18-46, 50-85, 87-122, and 128-163; these read DEIKRLRKRFKKLDLDSSSALSVKEFTSM, QENPLVQRVIDVFDTDGDGQVDFREFILGTSQFSVR, DEEQKLRFAFSIYDMDKDGYISNGELFQVLKMMVGD, and QLQQLVDKTIILLDKDGDGKISFQEFSAVVRSLEIH. Positions 63, 65, 67, 69, 74, 100, 102, 104, 106, and 111 each coordinate Ca(2+). The interval 131–136 is calcineurin A binding; it reads QLVDKT. The Ca(2+) site is built by Asp-141, Asp-143, Asp-145, Lys-147, and Glu-152.

It belongs to the calcineurin regulatory subunit family. As to quaternary structure, forms a complex composed of a calmodulin-dependent catalytic subunit (also known as calcineurin A) and a regulatory Ca(2+)-binding subunit (also known as calcineurin B). There are three catalytic subunits, each encoded by a separate gene (PPP3CA, PPP3CB, and PPP3CC) and two regulatory subunits which are also encoded by separate genes (PPP3R1 and PPP3R2). Interacts with SPATA33 (via PQIIIT motif).

Its subcellular location is the mitochondrion. In terms of biological role, regulatory subunit of calcineurin, a calcium-dependent, calmodulin stimulated protein phosphatase. Confers calcium sensitivity. The sequence is that of Calcineurin subunit B type 2 (PPP3R2) from Bos taurus (Bovine).